The chain runs to 132 residues: L-ectoine synthase (132 aa).

It belongs to the ectoine synthase family.

It carries out the reaction (2S)-4-acetamido-2-aminobutanoate = L-ectoine + H2O. The protein operates within amine and polyamine biosynthesis; ectoine biosynthesis; L-ectoine from L-aspartate 4-semialdehyde: step 3/3. Its function is as follows. Catalyzes the circularization of gamma-N-acetyl-alpha,gamma-diaminobutyric acid (ADABA) to ectoine (1,4,5,6-tetrahydro-2-methyl-4-pyrimidine carboxylic acid), which is an excellent osmoprotectant. In Streptomyces anulatus (Streptomyces chrysomallus), this protein is L-ectoine synthase (ectC).